The following is a 416-amino-acid chain: 26S proteasome regulatory subunit 8 (416 aa).

The span at 1–18 (MAPPASTASSADPSKPTA) shows a compositional bias: low complexity. Residues 1 to 29 (MAPPASTASSADPSKPTAQKLTEESDEKT) form a disordered region. 200-207 (GPPGTGKT) serves as a coordination point for ATP.

The protein belongs to the AAA ATPase family. In terms of assembly, component of the 19S proteasome regulatory particle complex. The 26S proteasome consists of a 20S core particle (CP) and two 19S regulatory subunits (RP). Interacts with elt-2.

The protein resides in the cytoplasm. It is found in the nucleus. In terms of biological role, component of the 26S proteasome, a multiprotein complex involved in the ATP-dependent degradation of ubiquitinated proteins. This complex plays a key role in the maintenance of protein homeostasis by removing misfolded or damaged proteins, which could impair cellular functions, and by removing proteins whose functions are no longer required. Therefore, the proteasome participates in numerous cellular processes, including cell cycle progression, apoptosis, or DNA damage repair. Belongs to the heterohexameric ring of AAA (ATPases associated with diverse cellular activities) proteins that unfolds ubiquitinated target proteins that are concurrently translocated into a proteolytic chamber and degraded into peptides. In addition, regulates gene expression in response to bacterial infection. Binds to the GATA transcription factor elt-2 to control its transcriptional activity and thus the expression of elt-2-dependent genes in response to infection by Gram-negative bacteria such as P.aeruginosa. The protein is 26S proteasome regulatory subunit 8 of Caenorhabditis elegans.